Reading from the N-terminus, the 1063-residue chain is Presequence protease, mitochondrial (1063 aa).

Residues 1–33 (MLRLANRVSRKDSGNLGIAQLKKRLLATSGVSQ) constitute a mitochondrion transit peptide. Position 105 (H105) interacts with Zn(2+). The active-site Proton acceptor is E108. Position 109 (H109) interacts with Zn(2+). Residue E181 is part of the active site. E206 provides a ligand contact to Zn(2+).

The protein belongs to the peptidase M16 family. PreP subfamily. Monomer and homodimer; homodimerization is induced by binding of the substrate. The cofactor is Zn(2+).

The protein localises to the mitochondrion intermembrane space. The protein resides in the mitochondrion matrix. Its function is as follows. Degrades mitochondrial transit peptides after their cleavage in the intermembrane space or in the matrix, and presequence peptides; clearance of these peptides is required to keep the presequence processing machinery running. Preferentially cleaves the N-terminal side of paired basic amino acid residues. Also degrades other unstructured peptides. May function as an ATP-dependent peptidase as opposed to a metalloendopeptidase. This is Presequence protease, mitochondrial (CYM1) from Debaryomyces hansenii (strain ATCC 36239 / CBS 767 / BCRC 21394 / JCM 1990 / NBRC 0083 / IGC 2968) (Yeast).